Reading from the N-terminus, the 175-residue chain is Thioredoxin M3, chloroplastic (175 aa).

The N-terminal 59 residues, 1-59, are a transit peptide targeting the chloroplast; the sequence is MAATATACPAPPPPRSLYRGVALAAPGRRRAGYGASSSAARRWPGCRRRWAAHRIRTVS. In terms of domain architecture, Thioredoxin spans 61 to 171; sequence AYSPRGAKTI…YVRAIEKSIS (111 aa). Catalysis depends on nucleophile residues Cys95 and Cys98. The cysteines at positions 95 and 98 are disulfide-linked.

Belongs to the thioredoxin family. Plant M-type subfamily.

It localises to the plastid. It is found in the chloroplast. In terms of biological role, probable thiol-disulfide oxidoreductase that may be involved in the redox regulation of chloroplastic enzymes. The sequence is that of Thioredoxin M3, chloroplastic from Oryza sativa subsp. japonica (Rice).